A 788-amino-acid polypeptide reads, in one-letter code: MSLRILLVGNGGREHALAWKLAQSPLVERIFVAPGNGGTDNPQGKIENIAIGSSQKDFAKLVEFAQSKDVGLVIPGPEQPLVEGIETHFRKVGIPVFGPSEKAAVMEGSKTFSKDFMKKHNIPTAAFENFTDYNKAVDYVKKVGHRVVIKASGLAAGKGVLIPTSTEEAIAAVKEVMQDKAFGEAGDEVVIEEFLEGDELSILAFSDGYTVVDMPPAQDHKRIGDGDQGLNTGGMGAYCPAPIGTPALLQEIKESILQPTIDGMRRDGIPFVGMLFTGIMLTPDGKPKVLEYNVRFGDPETQTILPLLSDDTDLAEVMLACVERRLDAVTLRVKPDAHAVTVVMSAGGYPESYKKGDAITVGGLPEQTYIFHAGTASENGQVITAGGRVIASTAVAPTLKDAVAQAYKGADAVEFNGKYNRKDIAYKAFRDAEKTSGGITYAQAGVSIDNGNKLVQQIKEKVKSTARPGTDSVIGGFGGLFDLKAAGFRDPLLVGATDGVGTKLKIAQSIDKHDTVGIDLVAMNVNDLVVQGAEPLVFLDYYATGKLDVNAAAAFVGGVADGCIQAGCALIGGETAEMPGIYYGNDYDANGTSIGAVERDAVLPRMDEIAKGDAILGLASSGVHSNGFSLVRKIIEHAGLTYTDACPWDQSKSLGEALLTPTRIYVKQLLPVINAKLTSALAHITGGGLVENIPRILPENYSAKIDVSTWPLPPVFQWLGKAGNVPKEDISKTLNMGIGMILVVKQEKVAEVTQLLEKVGEKVYQIGEIVPDNDVDEKTVLINTENWY.

The tract at residues 1 to 429 (MSLRILLVGN…NRKDIAYKAF (429 aa)) is GARS. Residues 114–323 (KDFMKKHNIP…LAEVMLACVE (210 aa)) form the ATP-grasp domain. 140 to 201 (VKKVGHRVVI…EEFLEGDELS (62 aa)) is an ATP binding site. Positions 291 and 293 each coordinate Mg(2+). The tract at residues 439 to 752 (ITYAQAGVSI…VVKQEKVAEV (314 aa)) is AIRS.

The protein in the N-terminal section; belongs to the GARS family. This sequence in the C-terminal section; belongs to the AIR synthase family. Requires Mg(2+) as cofactor. Mn(2+) serves as cofactor.

The protein resides in the cytoplasm. The protein localises to the cytosol. It carries out the reaction 5-phospho-beta-D-ribosylamine + glycine + ATP = N(1)-(5-phospho-beta-D-ribosyl)glycinamide + ADP + phosphate + H(+). The enzyme catalyses 2-formamido-N(1)-(5-O-phospho-beta-D-ribosyl)acetamidine + ATP = 5-amino-1-(5-phospho-beta-D-ribosyl)imidazole + ADP + phosphate + H(+). Its pathway is purine metabolism; IMP biosynthesis via de novo pathway; 5-amino-1-(5-phospho-D-ribosyl)imidazole from N(2)-formyl-N(1)-(5-phospho-D-ribosyl)glycinamide: step 2/2. The protein operates within purine metabolism; IMP biosynthesis via de novo pathway; N(1)-(5-phospho-D-ribosyl)glycinamide from 5-phospho-alpha-D-ribose 1-diphosphate: step 2/2. Catalyzes the second and fifth step in the 'de novo' purine biosynthesis pathway; contains phosphoribosylamine--glycine ligase (GARS) and phosphoribosylformylglycinamidine cyclo-ligase (AIRS) activities. This Yarrowia lipolytica (strain CLIB 122 / E 150) (Yeast) protein is Bifunctional purine biosynthetic protein ADE1.